Reading from the N-terminus, the 72-residue chain is Alpha-elapitoxin-Ast2b (72 aa).

5 cysteine pairs are disulfide-bonded: Cys-3–Cys-20, Cys-13–Cys-41, Cys-26–Cys-30, Cys-45–Cys-56, and Cys-57–Cys-62. Residue Arg-72 is modified to Arginine amide.

It belongs to the three-finger toxin family. Long-chain subfamily. Type II alpha-neurotoxin sub-subfamily. Expressed by the venom gland.

The protein resides in the secreted. Functionally, binds with high affinity to muscular (alpha-1/CHRNA1) and neuronal (alpha-7/CHRNA7) nicotinic acetylcholine receptor (nAChR) and inhibits acetylcholine from binding to the receptor, thereby impairing neuromuscular and neuronal transmission. The sequence is that of Alpha-elapitoxin-Ast2b from Hydrophis stokesii (Stokes's sea snake).